A 599-amino-acid chain; its full sequence is Matrix metallopeptidase-21 (599 aa).

Residues 1 to 20 (MLTVIRRIFIIQTFIFITAE) form the signal peptide. A propeptide spanning residues 21–170 (KIFHSRDHSD…NHEHQAPVRK (150 aa)) is cleaved from the precursor. A Zn(2+)-binding site is contributed by cysteine 130. The segment at 141–170 (DVTGSNSTRNHIRTSTNTSHNHEHQAPVRK) is disordered. Residues 143–159 (TGSNSTRNHIRTSTNTS) show a composition bias toward polar residues. A Zn(2+)-binding site is contributed by histidine 309. Glutamate 310 is a catalytic residue. The Zn(2+) site is built by histidine 313 and histidine 319. A disulfide bridge links cysteine 355 with cysteine 586. Hemopexin repeat units follow at residues 356–415 (TGRF…WHGL), 417–473 (SGGV…FPGV), 474–522 (SGPL…FPAI), and 529–585 (VRSL…WFDI). The N-linked (GlcNAc...) asparagine glycan is linked to asparagine 398.

This sequence belongs to the peptidase M10A family. Post-translationally, the precursor is cleaved by a furin endopeptidase.

Its function is as follows. Plays a specialized role in the generation of left-right asymmetry during embryogenesis. May act as a negative regulator of the NOTCH-signaling pathway. This is Matrix metallopeptidase-21 from Danio rerio (Zebrafish).